The chain runs to 1089 residues: Probable transport protein MmpL8 (1089 aa).

Residues 1 to 26 (MCDVLMQPVRTPRPSTNLRSKPLRPT) are disordered. 12 helical membrane-spanning segments follow: residues 44 to 64 (WVVI…VPSL), 222 to 242 (ITIL…TMVL), 257 to 277 (LVAI…IFMS), 316 to 336 (IGKV…GMVF), 349 to 369 (LGIS…ALMV), 400 to 420 (KTHL…AGLA), 555 to 575 (AIST…LLGG), 874 to 894 (IIAM…RAIV), 898 to 918 (YLIG…VIVF), 930 to 950 (IPGL…MLLI), 973 to 993 (GGVI…LVFA), and 996 to 1016 (GSVV…TFLV). The interval 1056–1078 (RTKRKPLLPKEEEEQSPPDDDDL) is disordered. Over residues 1066 to 1078 (EEEEQSPPDDDDL) the composition is skewed to acidic residues.

The protein belongs to the resistance-nodulation-cell division (RND) (TC 2.A.6) family. MmpL subfamily.

It is found in the cell membrane. The polypeptide is Probable transport protein MmpL8 (mmpL8) (Mycobacterium bovis (strain ATCC BAA-935 / AF2122/97)).